Reading from the N-terminus, the 155-residue chain is Protein Smg homolog (155 aa).

This sequence belongs to the Smg family.

The protein is Protein Smg homolog of Methylococcus capsulatus (strain ATCC 33009 / NCIMB 11132 / Bath).